The primary structure comprises 400 residues: Cytochrome b (400 aa).

A helical membrane pass occupies residues 47-67 (LGSIAGIALVIQIITGVILAM). 2 residues coordinate heme b: H97 and H111. The next 8 helical transmembrane spans lie at 98-118 (AVGASMFFAAVYLHIARGLYY), 131-151 (IGIIIFLTMMATAFMGYVLPW), 166-186 (FSAIPLIGKSIVTWLWGGFSV), 194-214 (FFSLHYLLPFIIVALVMLHLV), 247-267 (FVGFGVYFIIFAYFIFYEPNY), 306-326 (LGGVLLMFGSIFVLFLLPWLD), 341-361 (IAFWIFMADCLLLGYLGGQPA), and 368-388 (ISRFAACYYFFHFLVALPLIG). 2 residues coordinate heme b: H198 and H212.

Belongs to the cytochrome b family. The main subunits of complex b-c1 are: cytochrome b, cytochrome c1 and the Rieske protein. The cofactor is heme b.

It is found in the cell membrane. In terms of biological role, component of the ubiquinol-cytochrome c reductase complex (complex III or cytochrome b-c1 complex), which is a respiratory chain that generates an electrochemical potential coupled to ATP synthesis. The protein is Cytochrome b (petB) of Rickettsia bellii (strain RML369-C).